The primary structure comprises 266 residues: Glutamate racemase (266 aa).

Residues 9 to 10 (DS) and 41 to 42 (YG) each bind substrate. Cysteine 72 functions as the Proton donor/acceptor in the catalytic mechanism. A substrate-binding site is contributed by 73–74 (NT). Cysteine 183 acts as the Proton donor/acceptor in catalysis. 184–185 (TH) is a binding site for substrate.

It belongs to the aspartate/glutamate racemases family.

It catalyses the reaction L-glutamate = D-glutamate. The protein operates within cell wall biogenesis; peptidoglycan biosynthesis. Provides the (R)-glutamate required for cell wall biosynthesis. This chain is Glutamate racemase, found in Listeria monocytogenes serotype 4a (strain HCC23).